The chain runs to 82 residues: Putative antitoxin RelB1 (82 aa).

In terms of biological role, antitoxin component of a type II toxin-antitoxin (TA) system. Its cognate toxin is RelE1 (Potential). The chain is Putative antitoxin RelB1 (relB1) from Methanocaldococcus jannaschii (strain ATCC 43067 / DSM 2661 / JAL-1 / JCM 10045 / NBRC 100440) (Methanococcus jannaschii).